A 211-amino-acid chain; its full sequence is FMN-dependent NADH:quinone oxidoreductase 2 (211 aa).

17–19 (SYS) is a binding site for FMN.

The protein belongs to the azoreductase type 1 family. As to quaternary structure, homodimer. FMN serves as cofactor.

It catalyses the reaction 2 a quinone + NADH + H(+) = 2 a 1,4-benzosemiquinone + NAD(+). The catalysed reaction is N,N-dimethyl-1,4-phenylenediamine + anthranilate + 2 NAD(+) = 2-(4-dimethylaminophenyl)diazenylbenzoate + 2 NADH + 2 H(+). Its function is as follows. Quinone reductase that provides resistance to thiol-specific stress caused by electrophilic quinones. In terms of biological role, also exhibits azoreductase activity. Catalyzes the reductive cleavage of the azo bond in aromatic azo compounds to the corresponding amines. The chain is FMN-dependent NADH:quinone oxidoreductase 2 from Bacillus licheniformis (strain ATCC 14580 / DSM 13 / JCM 2505 / CCUG 7422 / NBRC 12200 / NCIMB 9375 / NCTC 10341 / NRRL NRS-1264 / Gibson 46).